The sequence spans 126 residues: Histone H2B type 1-H (126 aa).

The segment covering 1–12 (MPEPAKSAPAPK) has biased composition (low complexity). A disordered region spans residues 1-36 (MPEPAKSAPAPKKGSKKALTKAQKKDGKKRKRSRKE). Position 2 is an N-acetylproline (Pro-2). Position 3 is an ADP-ribosyl glutamic acid (Glu-3). N6-(2-hydroxyisobutyryl)lysine; alternate is present on Lys-6. Lys-6 bears the N6-(beta-hydroxybutyryl)lysine; alternate mark. The residue at position 6 (Lys-6) is an N6-acetyllysine; alternate. Lys-6 carries the N6-butyryllysine; alternate modification. Lys-6 is modified (N6-crotonyllysine; alternate). The residue at position 6 (Lys-6) is an N6-lactoyllysine; alternate. Lys-6 participates in a covalent cross-link: Glycyl lysine isopeptide (Lys-Gly) (interchain with G-Cter in SUMO2); alternate. Ser-7 bears the ADP-ribosylserine mark. N6-(beta-hydroxybutyryl)lysine; alternate is present on Lys-12. An N6-acetyllysine; alternate mark is found at Lys-12 and Lys-13. Lys-12 and Lys-13 each carry N6-crotonyllysine; alternate. Residue Lys-12 is modified to N6-lactoyllysine; alternate. Position 13 is an N6-(2-hydroxyisobutyryl)lysine; alternate (Lys-13). Residue Ser-15 is modified to Phosphoserine; by STK4/MST1. An N6-acetyllysine; alternate mark is found at Lys-16, Lys-17, Lys-21, and Lys-24. Lys-16, Lys-17, Lys-21, and Lys-24 each carry N6-crotonyllysine; alternate. N6-lactoyllysine; alternate occurs at positions 16, 17, 21, and 24. N6-glutaryllysine; alternate is present on Lys-17. Residues Lys-21 and Lys-24 each carry the N6-(2-hydroxyisobutyryl)lysine; alternate modification. Lys-21 is modified (N6-(beta-hydroxybutyryl)lysine; alternate). Residue Lys-21 is modified to N6-butyryllysine; alternate. Residue Lys-21 forms a Glycyl lysine isopeptide (Lys-Gly) (interchain with G-Cter in SUMO2); alternate linkage. Lys-25 is subject to N6-(2-hydroxyisobutyryl)lysine. Lys-35 is modified (N6-(2-hydroxyisobutyryl)lysine; alternate). At Lys-35 the chain carries N6-(beta-hydroxybutyryl)lysine; alternate. An N6-crotonyllysine; alternate modification is found at Lys-35. Lys-35 carries the N6-glutaryllysine; alternate modification. An N6-succinyllysine; alternate modification is found at Lys-35. Residue Lys-35 forms a Glycyl lysine isopeptide (Lys-Gly) (interchain with G-Cter in ubiquitin); alternate linkage. Residue Glu-36 is modified to PolyADP-ribosyl glutamic acid. Ser-37 is modified (phosphoserine; by AMPK). N6-(2-hydroxyisobutyryl)lysine; alternate occurs at positions 44, 47, and 58. N6-lactoyllysine; alternate is present on Lys-44. 2 positions are modified to N6-glutaryllysine; alternate: Lys-44 and Lys-47. Lys-47 carries the post-translational modification N6-methyllysine; alternate. At Lys-58 the chain carries N6,N6-dimethyllysine; alternate. At Arg-80 the chain carries Dimethylated arginine. Lys-86 carries the N6-(2-hydroxyisobutyryl)lysine; alternate modification. N6-acetyllysine; alternate is present on Lys-86. Lys-86 carries the post-translational modification N6-lactoyllysine; alternate. Lys-86 is subject to N6,N6,N6-trimethyllysine; alternate. Omega-N-methylarginine occurs at positions 87 and 93. N6-(2-hydroxyisobutyryl)lysine; alternate is present on Lys-109. An N6-(beta-hydroxybutyryl)lysine; alternate modification is found at Lys-109. Lys-109 is modified (N6-lactoyllysine; alternate). An N6-glutaryllysine; alternate modification is found at Lys-109. Lys-109 bears the N6-methyllysine; alternate mark. The O-linked (GlcNAc) serine glycan is linked to Ser-113. Thr-116 bears the Phosphothreonine mark. N6-(2-hydroxyisobutyryl)lysine; alternate is present on residues Lys-117 and Lys-121. Lys-117 is modified (N6-(beta-hydroxybutyryl)lysine; alternate). Lys-117 and Lys-121 each carry N6-lactoyllysine; alternate. N6-glutaryllysine; alternate is present on residues Lys-117 and Lys-121. N6-succinyllysine; alternate occurs at positions 117 and 121. At Lys-117 the chain carries N6-methylated lysine; alternate. A Glycyl lysine isopeptide (Lys-Gly) (interchain with G-Cter in ubiquitin); alternate cross-link involves residue Lys-121.

It belongs to the histone H2B family. In terms of assembly, the nucleosome is a histone octamer containing two molecules each of H2A, H2B, H3 and H4 assembled in one H3-H4 heterotetramer and two H2A-H2B heterodimers. The octamer wraps approximately 147 bp of DNA. Post-translationally, monoubiquitination at Lys-35 (H2BK34Ub) by the MSL1/MSL2 dimer is required for histone H3 'Lys-4' (H3K4me) and 'Lys-79' (H3K79me) methylation and transcription activation at specific gene loci, such as HOXA9 and MEIS1 loci. Similarly, monoubiquitination at Lys-121 (H2BK120Ub) by the RNF20/40 complex gives a specific tag for epigenetic transcriptional activation and is also prerequisite for histone H3 'Lys-4' and 'Lys-79' methylation. It also functions cooperatively with the FACT dimer to stimulate elongation by RNA polymerase II. H2BK120Ub also acts as a regulator of mRNA splicing: deubiquitination by USP49 is required for efficient cotranscriptional splicing of a large set of exons. In terms of processing, phosphorylated on Ser-15 (H2BS14ph) by STK4/MST1 during apoptosis; which facilitates apoptotic chromatin condensation. Also phosphorylated on Ser-15 in response to DNA double strand breaks (DSBs), and in correlation with somatic hypermutation and immunoglobulin class-switch recombination. Phosphorylation at Ser-37 (H2BS36ph) by AMPK in response to stress promotes transcription. GlcNAcylation at Ser-113 promotes monoubiquitination of Lys-121. It fluctuates in response to extracellular glucose, and associates with transcribed genes. Post-translationally, ADP-ribosylated by PARP1 or PARP2 on Ser-7 (H2BS6ADPr) in response to DNA damage. H2BS6ADPr promotes recruitment of CHD1L. Mono-ADP-ribosylated on Glu-3 (H2BE2ADPr) by PARP3 in response to single-strand breaks. Poly ADP-ribosylation on Glu-36 (H2BE35ADPr) by PARP1 regulates adipogenesis: it inhibits phosphorylation at Ser-37 (H2BS36ph), thereby blocking expression of pro-adipogenetic genes. In terms of processing, crotonylation (Kcr) is specifically present in male germ cells and marks testis-specific genes in post-meiotic cells, including X-linked genes that escape sex chromosome inactivation in haploid cells. Crotonylation marks active promoters and enhancers and confers resistance to transcriptional repressors. It is also associated with post-meiotically activated genes on autosomes. Hydroxybutyrylation of histones is induced by starvation. Post-translationally, lactylated in macrophages by EP300/P300 by using lactoyl-CoA directly derived from endogenous or exogenous lactate, leading to stimulates gene transcription.

It is found in the nucleus. Its subcellular location is the chromosome. Core component of nucleosome. Nucleosomes wrap and compact DNA into chromatin, limiting DNA accessibility to the cellular machineries which require DNA as a template. Histones thereby play a central role in transcription regulation, DNA repair, DNA replication and chromosomal stability. DNA accessibility is regulated via a complex set of post-translational modifications of histones, also called histone code, and nucleosome remodeling. The polypeptide is Histone H2B type 1-H (Mus musculus (Mouse)).